Reading from the N-terminus, the 541-residue chain is Pheromone B beta 1 receptor (541 aa).

Topologically, residues 1–3 (MHP) are extracellular. The chain crosses the membrane as a helical span at residues 4–24 (EFAPVAFLSAASLALPLPWHW). At 25–33 (RAGNVATLS) the chain is on the cytoplasmic side. A helical transmembrane segment spans residues 34–54 (IIAWLFIMNMIYGINAVIWAG). Topologically, residues 55–69 (SARITAVVYCDITTK) are extracellular. The helical transmembrane segment at 70–90 (LTIGGNFALPAACLCLCIHLE) threads the bilayer. Residues 91 to 109 (RVASVRAAQTTAADKRRRT) lie on the Cytoplasmic side of the membrane. The chain crosses the membrane as a helical span at residues 110-130 (IFELAMCWLLPIIFMALHYVV). Residues 131-150 (QGHRFDIVEDFGCRPATYYS) are Extracellular-facing. Residues 151-171 (IPAIFIVWVPPLTMAAASLVY) traverse the membrane as a helical segment. Residues 172–205 (ASLAIRHFMHRRLSFAMHLQARSSALTTSRYLRL) are Cytoplasmic-facing. Residues 206–226 (ILMAIVQLVWLVVTTAYTLWF) form a helical membrane-spanning segment. The Extracellular portion of the chain corresponds to 227–264 (SSMTLNLRPWTTWADVHSNFGRIQTWPAIITPAVILRG). A helical membrane pass occupies residues 265–285 (ACTLWWMVPASTWIFVAFFAF). At 286–541 (GNDAVEEYKR…IASVFPGGRR (256 aa)) the chain is on the cytoplasmic side. Disordered stretches follow at residues 364–393 (TTST…PLDS) and 414–541 (YTIE…GGRR). Over residues 372 to 385 (MPPPYSLPPPPPPQ) the composition is skewed to pro residues. The segment covering 420–429 (PETPSTSSST) has biased composition (low complexity). 2 stretches are compositionally biased toward pro residues: residues 467 to 478 (IPAPPSLPPPTH) and 493 to 502 (SRPPAFPPYP).

This sequence belongs to the G-protein coupled receptor 4 family.

It is found in the membrane. Its function is as follows. Receptor for the BBP1 pheromone, a prenylated mating factor. The polypeptide is Pheromone B beta 1 receptor (BBR1) (Schizophyllum commune (Split gill fungus)).